We begin with the raw amino-acid sequence, 471 residues long: ATP synthase subunit beta (471 aa).

153 to 160 (GGAGVGKT) serves as a coordination point for ATP.

It belongs to the ATPase alpha/beta chains family. In terms of assembly, F-type ATPases have 2 components, CF(1) - the catalytic core - and CF(0) - the membrane proton channel. CF(1) has five subunits: alpha(3), beta(3), gamma(1), delta(1), epsilon(1). CF(0) has four main subunits: a(1), b(1), b'(1) and c(9-12).

It is found in the cell membrane. It catalyses the reaction ATP + H2O + 4 H(+)(in) = ADP + phosphate + 5 H(+)(out). In terms of biological role, produces ATP from ADP in the presence of a proton gradient across the membrane. The catalytic sites are hosted primarily by the beta subunits. In Chloroflexus aurantiacus (strain ATCC 29364 / DSM 637 / Y-400-fl), this protein is ATP synthase subunit beta.